The primary structure comprises 418 residues: Homocitrate synthase, mitochondrial (418 aa).

Positions 1–10 (MSVSEANGTE) are enriched in polar residues. The tract at residues 1–25 (MSVSEANGTETIKPPMNGNPYGPNP) is disordered. Low complexity predominate over residues 14-25 (PPMNGNPYGPNP). One can recognise a Pyruvate carboxyltransferase domain in the interval 35–288 (FSIIESTLRE…THKYKLNQLR (254 aa)). 2-oxoglutarate contacts are provided by arginine 43, glutamate 44, and histidine 103. Residue glutamate 44 coordinates L-lysine. Glutamate 44 serves as a coordination point for Zn(2+). Residue aspartate 123 coordinates L-lysine. 2-oxoglutarate contacts are provided by arginine 163, serine 165, threonine 197, histidine 224, and histidine 226. Threonine 197 contributes to the L-lysine binding site. Histidine 224 and histidine 226 together coordinate Zn(2+). The active-site Proton acceptor is histidine 321.

Belongs to the alpha-IPM synthase/homocitrate synthase family. Homocitrate synthase LYS20/LYS21 subfamily. Requires Mg(2+) as cofactor. The cofactor is Mn(2+). Zn(2+) is required as a cofactor. Co(2+) serves as cofactor.

The protein resides in the mitochondrion. The enzyme catalyses acetyl-CoA + 2-oxoglutarate + H2O = (2R)-homocitrate + CoA + H(+). It functions in the pathway amino-acid biosynthesis; L-lysine biosynthesis via AAA pathway; L-alpha-aminoadipate from 2-oxoglutarate: step 1/5. The activity is controled by feedback inhibition by L-lysine, the final product of the pathway that acts as a competitive inhibitor of 2-oxoglutarate. Catalyzes the aldol-type condensation of 2-oxoglutarate with acetyl-CoA to yield homocitrate, the first step of the alpha-aminoadipate (AAA) lysine biosynthesis pathway. The polypeptide is Homocitrate synthase, mitochondrial (Schizosaccharomyces pombe (strain 972 / ATCC 24843) (Fission yeast)).